Reading from the N-terminus, the 110-residue chain is MKLKKKFLEKSKKVAEERINILMNLAEKESNSGKTERSKNYVLLGKKIAMRMRMPYPKEWKRRICKNCGSFLIYGKNARVRTKAKNYPHVVITCLECNSITRIPIKTAKK.

Residues Cys-65, Cys-68, Cys-94, and Cys-97 each coordinate Zn(2+).

Belongs to the eukaryotic/archaeal RNase P protein component 4 family. As to quaternary structure, consists of a catalytic RNA component and at least 5 protein subunits. It depends on Zn(2+) as a cofactor.

Its subcellular location is the cytoplasm. The enzyme catalyses Endonucleolytic cleavage of RNA, removing 5'-extranucleotides from tRNA precursor.. Part of ribonuclease P, a protein complex that generates mature tRNA molecules by cleaving their 5'-ends. In Methanococcus maripaludis (strain DSM 14266 / JCM 13030 / NBRC 101832 / S2 / LL), this protein is Ribonuclease P protein component 4.